Reading from the N-terminus, the 222-residue chain is Charged multivesicular body protein 4b (222 aa).

Disordered regions lie at residues 1–21 and 177–222; these read MSLI…PSPQ and NLLE…WATA. Positions 21 to 182 form a coiled coil; the sequence is QEAIQKLRDT…ELDKNLLEVQ (162 aa).

It belongs to the SNF7 family. Probable core component of the endosomal sorting required for transport complex III (ESCRT-III). ESCRT-III components are thought to multimerize to form a flat lattice on the perimeter membrane of the endosome.

It is found in the cytoplasm. The protein resides in the cytosol. Its subcellular location is the late endosome membrane. It localises to the midbody. Functionally, probable core component of the endosomal sorting required for transport complex III (ESCRT-III) which is involved in multivesicular bodies (MVBs) formation and sorting of endosomal cargo proteins into MVBs. MVBs contain intraluminal vesicles (ILVs) that are generated by invagination and scission from the limiting membrane of the endosome and mostly are delivered to lysosomes enabling degradation of membrane proteins, such as stimulated growth factor receptors, lysosomal enzymes and lipids. The sequence is that of Charged multivesicular body protein 4b (chmp4b) from Xenopus laevis (African clawed frog).